We begin with the raw amino-acid sequence, 364 residues long: Putative agmatine deiminase (364 aa).

C355 (amidino-cysteine intermediate) is an active-site residue.

The protein belongs to the agmatine deiminase family.

The enzyme catalyses agmatine + H2O = N-carbamoylputrescine + NH4(+). The chain is Putative agmatine deiminase from Mycoplasma capricolum subsp. capricolum (strain California kid / ATCC 27343 / NCTC 10154).